Here is an 87-residue protein sequence, read N- to C-terminus: Large ribosomal subunit protein bL27 (87 aa).

Residues 1 to 20 are disordered; sequence MARKRGGSGSKNGRDSNPKY.

It belongs to the bacterial ribosomal protein bL27 family.

This chain is Large ribosomal subunit protein bL27 (rpmA), found in Treponema pallidum (strain Nichols).